The following is a 112-amino-acid chain: uncharacterized protein (112 aa).

One can recognise an HIT domain in the interval 5–112 (IFQKIIKGII…LLGGKKLNKI (108 aa)). The Histidine triad motif signature appears at 98–102 (HLHLH).

This is an uncharacterized protein from Buchnera aphidicola subsp. Baizongia pistaciae (strain Bp).